Consider the following 261-residue polypeptide: Glucosamine-6-phosphate deaminase (261 aa).

Catalysis depends on aspartate 67, which acts as the Proton acceptor; for enolization step. Aspartate 136 acts as the For ring-opening step in catalysis. The Proton acceptor; for ring-opening step role is filled by histidine 138. The active-site For ring-opening step is the glutamate 143.

The protein belongs to the glucosamine/galactosamine-6-phosphate isomerase family. NagB subfamily.

The enzyme catalyses alpha-D-glucosamine 6-phosphate + H2O = beta-D-fructose 6-phosphate + NH4(+). Its pathway is amino-sugar metabolism; N-acetylneuraminate degradation; D-fructose 6-phosphate from N-acetylneuraminate: step 5/5. In terms of biological role, catalyzes the reversible isomerization-deamination of glucosamine 6-phosphate (GlcN6P) to form fructose 6-phosphate (Fru6P) and ammonium ion. This is Glucosamine-6-phosphate deaminase from Streptomyces avermitilis (strain ATCC 31267 / DSM 46492 / JCM 5070 / NBRC 14893 / NCIMB 12804 / NRRL 8165 / MA-4680).